A 448-amino-acid chain; its full sequence is Multiple inositol polyphosphate phosphatase 1 (448 aa).

A signal peptide spans 1–19; it reads MAPRRAACLLPLLVAVASA. Residue histidine 69 is part of the active site. Residues asparagine 203, asparagine 257, asparagine 409, and asparagine 441 are each glycosylated (N-linked (GlcNAc...) asparagine). Residues 445–448 carry the Prevents secretion from ER motif; the sequence is ADEL.

This sequence belongs to the histidine acid phosphatase family. MINPP1 subfamily. In terms of processing, N-glycosylated. As to expression, present in growth plate chondrocytes but not detectable in articular chondrocytes (at protein level). Spatially restricted to chondrocytes in the lower portion of the proliferative zone and the upper portion of the hypertrophic zone in the growth plate of long bones (at protein level). Weakly expressed in kidney, liver, lung, skin and spleen, and not detected in brain, heart and muscle.

The protein resides in the endoplasmic reticulum lumen. It is found in the secreted. It localises to the cell membrane. It catalyses the reaction 1D-myo-inositol hexakisphosphate + H2O = 1D-myo-inositol 1,2,4,5,6-pentakisphosphate + phosphate. The catalysed reaction is 1D-myo-inositol 1,2,4,5,6-pentakisphosphate + H2O = 1D-myo-inositol 1,2,5,6-tetrakisphosphate + phosphate. The enzyme catalyses 1D-myo-inositol 1,2,5,6-tetrakisphosphate + H2O = 1D-myo-inositol 1,2,6-trisphosphate + phosphate. It carries out the reaction 1D-myo-inositol 1,2,6-trisphosphate + H2O = 1D-myo-inositol 1,2-bisphosphate + phosphate. It catalyses the reaction 1D-myo-inositol 1,2-bisphosphate + H2O = 1D-myo-inositol 2-phosphate + phosphate. The catalysed reaction is 1D-myo-inositol hexakisphosphate + H2O = 1D-myo-inositol 1,2,3,5,6-pentakisphosphate + phosphate. The enzyme catalyses 1D-myo-inositol 1,2,3,5,6-pentakisphosphate + H2O = 1D-myo-inositol 1,2,3,6-tetrakisphosphate + phosphate. It carries out the reaction 1D-myo-inositol 1,2,3,6-tetrakisphosphate + H2O = 1D-myo-inositol 1,2,3-trisphosphate + phosphate. It catalyses the reaction 1D-myo-inositol 1,2,3-trisphosphate + H2O = 1D-myo-inositol 2,3-bisphosphate + phosphate. The catalysed reaction is 1D-myo-inositol 2,3-bisphosphate + H2O = 1D-myo-inositol 2-phosphate + phosphate. The enzyme catalyses 1D-myo-inositol 1,3,4,5,6-pentakisphosphate + H2O = 1D-myo-inositol 1,4,5,6-tetrakisphosphate + phosphate. It carries out the reaction 1D-myo-inositol 1,4,5,6-tetrakisphosphate + H2O = 1D-myo-inositol 1,4,5-trisphosphate + phosphate. It catalyses the reaction (2R)-2,3-bisphosphoglycerate + H2O = (2R)-2-phosphoglycerate + phosphate. In terms of biological role, multiple inositol polyphosphate phosphatase that hydrolyzes 1D-myo-inositol 1,3,4,5,6-pentakisphosphate (InsP5[2OH]) and 1D-myo-inositol hexakisphosphate (InsP6) to a range of less phosphorylated inositol phosphates. This regulates the availability of these various small molecule second messengers and metal chelators which control many aspects of cell physiology. Has a weak in vitro activity towards 1D-myo-inositol 1,4,5-trisphosphate which is unlikely to be physiologically relevant. By regulating intracellular inositol polyphosphates pools, which act as metal chelators, it may control the availability of intracellular calcium and iron, which are important for proper neuronal development and homeostasis. May have a dual substrate specificity, and function as a 2,3-bisphosphoglycerate 3-phosphatase hydrolyzing 2,3-bisphosphoglycerate to 2-phosphoglycerate. 2,3-bisphosphoglycerate (BPG) is formed as part of the Rapoport-Luebering glycolytic bypass and is a regulator of systemic oxygen homeostasis as the major allosteric effector of hemoglobin. The protein is Multiple inositol polyphosphate phosphatase 1 (MINPP1) of Gallus gallus (Chicken).